Here is a 427-residue protein sequence, read N- to C-terminus: 3-isopropylmalate dehydratase large subunit (427 aa).

3 residues coordinate [4Fe-4S] cluster: C308, C368, and C371.

This sequence belongs to the aconitase/IPM isomerase family. LeuC type 2 subfamily. As to quaternary structure, heterodimer of LeuC and LeuD. [4Fe-4S] cluster is required as a cofactor.

It catalyses the reaction (2R,3S)-3-isopropylmalate = (2S)-2-isopropylmalate. Its pathway is amino-acid biosynthesis; L-leucine biosynthesis; L-leucine from 3-methyl-2-oxobutanoate: step 2/4. Functionally, catalyzes the isomerization between 2-isopropylmalate and 3-isopropylmalate, via the formation of 2-isopropylmaleate. The sequence is that of 3-isopropylmalate dehydratase large subunit from Citrifermentans bemidjiense (strain ATCC BAA-1014 / DSM 16622 / JCM 12645 / Bem) (Geobacter bemidjiensis).